We begin with the raw amino-acid sequence, 272 residues long: Putative phosphoenolpyruvate synthase regulatory protein (272 aa).

152–159 (GVSRSGKT) serves as a coordination point for ADP.

The protein belongs to the pyruvate, phosphate/water dikinase regulatory protein family. PSRP subfamily.

The enzyme catalyses [pyruvate, water dikinase] + ADP = [pyruvate, water dikinase]-phosphate + AMP + H(+). It carries out the reaction [pyruvate, water dikinase]-phosphate + phosphate + H(+) = [pyruvate, water dikinase] + diphosphate. Functionally, bifunctional serine/threonine kinase and phosphorylase involved in the regulation of the phosphoenolpyruvate synthase (PEPS) by catalyzing its phosphorylation/dephosphorylation. This chain is Putative phosphoenolpyruvate synthase regulatory protein, found in Methylibium petroleiphilum (strain ATCC BAA-1232 / LMG 22953 / PM1).